The following is a 452-amino-acid chain: UPF0210 protein Daud_1353 (452 aa).

It belongs to the UPF0210 family. As to quaternary structure, homodimer.

This is UPF0210 protein Daud_1353 from Desulforudis audaxviator (strain MP104C).